Here is a 705-residue protein sequence, read N- to C-terminus: Elongation factor G (705 aa).

The tr-type G domain maps to glutamate 8–asparagine 290. GTP is bound by residues alanine 17–threonine 24, aspartate 88–histidine 92, and asparagine 142–aspartate 145.

Belongs to the TRAFAC class translation factor GTPase superfamily. Classic translation factor GTPase family. EF-G/EF-2 subfamily.

It is found in the cytoplasm. Functionally, catalyzes the GTP-dependent ribosomal translocation step during translation elongation. During this step, the ribosome changes from the pre-translocational (PRE) to the post-translocational (POST) state as the newly formed A-site-bound peptidyl-tRNA and P-site-bound deacylated tRNA move to the P and E sites, respectively. Catalyzes the coordinated movement of the two tRNA molecules, the mRNA and conformational changes in the ribosome. The protein is Elongation factor G of Francisella philomiragia subsp. philomiragia (strain ATCC 25017 / CCUG 19701 / FSC 153 / O#319-036).